The chain runs to 722 residues: Zinc finger protein 600 (722 aa).

Residues 162-184 (FQCNESGKAFNCSSLLRKHQIPH) form a C2H2-type 1; degenerate zinc finger. C2H2-type zinc fingers lie at residues 190-212 (YKCD…CRCH), 218-240 (YKCN…RRLH), 246-268 (HKCN…KAIH), 274-296 (YKCN…RRIH), 302-324 (YKCE…KRIH), 330-352 (YKCK…KRIH), 358-380 (YKCN…HRLH), 386-408 (YKCK…TRIH), and 414-436 (YKCN…KSIH). The segment at 442–464 (YKYEECEKVFSCGSTLETHKIIH) adopts a C2H2-type 11; degenerate zinc-finger fold. 9 consecutive C2H2-type zinc fingers follow at residues 470-492 (YKCK…TRIH), 498-520 (YKCN…RRVH), 526-548 (YKCN…RRLH), 554-576 (YKCN…RRLH), 582-604 (YKCT…TRIH), 610-632 (YKCN…HRIH), 638-660 (YKCE…RRIH), 666-688 (YKCK…TGLH), and 694-716 (YKCN…QAVH).

The protein belongs to the krueppel C2H2-type zinc-finger protein family.

It is found in the nucleus. Functionally, may be involved in transcriptional regulation. This is Zinc finger protein 600 (ZNF600) from Homo sapiens (Human).